Reading from the N-terminus, the 367-residue chain is Epoxide hydrolase 3 (367 aa).

A helical transmembrane segment spans residues 22–42 (ALVMSLVYLAALVAAFVYSCI). Asp180 acts as the Nucleophile in catalysis. Tyr288 functions as the Proton donor in the catalytic mechanism. The Proton acceptor role is filled by His344.

The protein belongs to the AB hydrolase superfamily. Epoxide hydrolase family. In terms of tissue distribution, predominantly expressed in skin, esophagus, lung and tongue and to a lesser extent in pancreas and eye.

The protein resides in the microsome membrane. The enzyme catalyses an epoxide + H2O = an ethanediol. It catalyses the reaction 9,10-epoxyoctadecanoate + H2O = 9,10-dihydroxyoctadecanoate. The catalysed reaction is 9,10-epoxy-(12Z)-octadecenoate + H2O = 9,10-dihydroxy-(12Z)-octadecenoate. It carries out the reaction 8,9-epoxy-(5Z,11Z,14Z)-eicosatrienoate + H2O = 8,9-dihydroxy-(5Z,11Z,14Z)-eicosatrienoate. The enzyme catalyses 11,12-epoxy-(5Z,8Z,14Z)-eicosatrienoate + H2O = 11,12-dihydroxy-(5Z,8Z,14Z)-eicosatrienoate. It catalyses the reaction 14,15-epoxy-(5Z,8Z,11Z)-eicosatrienoate + H2O = 14,15-dihydroxy-(5Z,8Z,11Z)-eicosatrienoate. With respect to regulation, inhibited by 1-(1-acetylpiperidin-4-yl)-3-(4-(trifl uoromethoxy)phenyl)urea (TPAU), 1-cyclohexyl-3-dodecylurea (CDU), 12-(3-adamantan-1-yl-ureido)-dodecanoic acid (AUDA), 1-((3S, 5S, 7S)-adamantan-1-yl)-3-(5-(2-(2-ethoxyethoxy) ethoxy)pentyl)urea (AEPU) and to a lesser extent by 8-(3-((3S, 5S, 7S)-adamantan-1-yl)ureido) octanoic acid (AUOA). In terms of biological role, catalyzes the hydrolysis of epoxide-containing fatty acids. Active in vitro against epoxyeicosatrienoic acids (EETs) including 8,9-EET, 9,10-EET, 11,12-EET and 14,15-EET and leukotoxin. This Mus musculus (Mouse) protein is Epoxide hydrolase 3 (Ephx3).